The following is a 276-amino-acid chain: Microtubule-associated protein RP/EB family member 1A (276 aa).

The Calponin-homology (CH) domain maps to 13–115 (FVGRNEILTW…FLQWLKRFCD (103 aa)). Residues 124-172 (ENYNPVERRSRNGKERSVKGSNKIPKSLQTNNNHPPPNSSSVGLSKASG) form a disordered region. The span at 129–141 (VERRSRNGKERSV) shows a compositional bias: basic and acidic residues. The segment covering 162–172 (SSSVGLSKASG) has biased composition (low complexity). Residues 173–243 (PKSAKAAEVQ…LYATDANESA (71 aa)) enclose the EB1 C-terminal domain. Residues 252-276 (NQSLGVEDDEAEGNGEQLEEEKTQA) are disordered. Over residues 257 to 270 (VEDDEAEGNGEQLE) the composition is skewed to acidic residues.

The protein belongs to the MAPRE family. Homodimer and heterodimer with EB1B. Interacts with tobamovirus movement protein. Highly expressed in guard cells of leaf stomata, pollen grains and pollen tubes. Expressed in young roots.

It is found in the cytoplasm. The protein localises to the cytoskeleton. Its subcellular location is the spindle pole. It localises to the phragmoplast. Binds to the plus end of microtubules and regulates the dynamics of the microtubule cytoskeleton. May be involved in anchoring microtubules to their nucleation sites and/or functioning as a reservoir for distribution to the growing end. In plants, microtubule minus ends are not necessarily severed from the nucleation site and transported to the plus end of a microtubule as part of the recycling process. May play a role in endomembrane organization during polarized growth of plant cells. Interacts with the tobamovirus movement protein (MP) and may play a role in the association of MP with the microtubule system during infection. The protein is Microtubule-associated protein RP/EB family member 1A (EB1A) of Arabidopsis thaliana (Mouse-ear cress).